The following is a 225-amino-acid chain: MKQYLIAPSILSADFARLGEDTAKALAAGADVVHFDVMDNHYVPNLTIGPMVLKSLRNYGITAPIDVHLMVKPVDRIVPDFAAAGASIITFHPEASEHVDRTLQLIKENGCKAGLVFNPATPLSYLDYVMDKLDVILLMSVNPGFGGQSFIPQTLDKLREVRRRIDESGFDIRLEVDGGVKVNNIGEIAAAGADMFVAGSAIFDQPDYKKVIDEMRSELAKVSHE.

Ser-9 is a binding site for substrate. A divalent metal cation is bound by residues His-34, Asp-36, and His-68. Asp-36 (proton acceptor) is an active-site residue. Substrate-binding positions include His-68, 144–147, 177–179, and 199–200; these read GFGG, DGG, and GS. Asp-177 lines the a divalent metal cation pocket. The Proton donor role is filled by Asp-177.

The protein belongs to the ribulose-phosphate 3-epimerase family. A divalent metal cation is required as a cofactor.

It catalyses the reaction D-ribulose 5-phosphate = D-xylulose 5-phosphate. It functions in the pathway carbohydrate degradation. Its function is as follows. Catalyzes the reversible epimerization of D-ribulose 5-phosphate to D-xylulose 5-phosphate. This is Ribulose-phosphate 3-epimerase from Escherichia coli O157:H7.